The following is a 384-amino-acid chain: Neuropeptide Y receptor type 1 (384 aa).

At 1–44 (MNSTLFSQVENHSVHSNFSEKNAQLLAFENDDCHLPLAMIFTLA) the chain is on the extracellular side. 3 N-linked (GlcNAc...) asparagine glycosylation sites follow: Asn2, Asn11, and Asn17. Residues 45 to 65 (LAYGAVIILGVSGNLALIIII) traverse the membrane as a helical segment. The Cytoplasmic portion of the chain corresponds to 66 to 76 (LKQKEMRNVTN). The helical transmembrane segment at 77-97 (ILIVNLSFSDLLVAIMCLPFT) threads the bilayer. Residues 98-116 (FVYTLMDHWVFGEAMCKLN) lie on the Extracellular side of the membrane. Cys113 and Cys198 form a disulfide bridge. The chain crosses the membrane as a helical span at residues 117–137 (PFVQCVSITVSIFSLVLIAVE). Over 138-154 (RHQLIINPRGWRPNNRH) the chain is Cytoplasmic. Residues 155–175 (AYVGIAVIWVLAVASSLPFLI) form a helical membrane-spanning segment. Residues 176–211 (YQVMTDEPFQNVTLDAYKDKYVCFDQFPSDSHRLSY) are Extracellular-facing. The helical transmembrane segment at 212–232 (TTLLLVLQYFGPLCFIFICYF) threads the bilayer. The Cytoplasmic segment spans residues 233 to 260 (KIYIRLKRRNNMMDKMRDNKYRSSETKR). The chain crosses the membrane as a helical span at residues 261 to 281 (INIMLLSIVVAFAVCWLPLTI). Topologically, residues 282–299 (FNTVFDWNHQIIATCNHN) are extracellular. Residues 300–320 (LLFLLCHLTAMISTCVNPIFY) form a helical membrane-spanning segment. The Cytoplasmic segment spans residues 321-384 (GFLNKNFQRD…INNNDDNEKI (64 aa)). Cys338 carries the S-palmitoyl cysteine lipid modification. At Ser368 the chain carries Phosphoserine.

The protein belongs to the G-protein coupled receptor 1 family.

It is found in the cell membrane. Its function is as follows. Receptor for neuropeptide Y and peptide YY. The rank order of affinity of this receptor for pancreatic polypeptides is NPY &gt; [Pro-34] PYY, PYY and [Leu-31, Pro-34] NPY &gt; NPY (2-36) &gt; [Ile-31, Gln-34] PP and PYY (3-36) &gt; PP &gt; NPY free acid. This chain is Neuropeptide Y receptor type 1 (NPY1R), found in Homo sapiens (Human).